Here is a 344-residue protein sequence, read N- to C-terminus: MIAVSGGGTGGHFFPALAFTNYVLKKEKVKFIGSKRGIEYELKDLIKTEKLFLDVEPLRERNFYQKLKAIWKFLKAQEEINEFLKEDYRALIFGGYASLPLGINTVLRRKELFIHEQNSIPSKTNKILSKKAKKVLITFNYTKRFFPEGVRVGLPIRKELKKKLPKKEVKKRFGLEPDKITVLIFGGSQGALFLNELARDLKSVLPKEFQVILLTGKIHYEKFKNLEGEKFRVMPFSLDMGLIYSASDVAISRAGAGTINELSHFGVPSVFVPYPYAVDDHQFYNAKEIEKLGGGLVLRQEEAKPDKVLSALKEIVKNLERYSENIKKFFAEGAEERMYEELLG.

UDP-N-acetyl-alpha-D-glucosamine-binding positions include 9 to 11, asparagine 118, arginine 157, serine 188, and glutamine 282; that span reads TGG.

This sequence belongs to the glycosyltransferase 28 family. MurG subfamily.

The protein resides in the cell inner membrane. It catalyses the reaction di-trans,octa-cis-undecaprenyl diphospho-N-acetyl-alpha-D-muramoyl-L-alanyl-D-glutamyl-meso-2,6-diaminopimeloyl-D-alanyl-D-alanine + UDP-N-acetyl-alpha-D-glucosamine = di-trans,octa-cis-undecaprenyl diphospho-[N-acetyl-alpha-D-glucosaminyl-(1-&gt;4)]-N-acetyl-alpha-D-muramoyl-L-alanyl-D-glutamyl-meso-2,6-diaminopimeloyl-D-alanyl-D-alanine + UDP + H(+). Its pathway is cell wall biogenesis; peptidoglycan biosynthesis. Its function is as follows. Cell wall formation. Catalyzes the transfer of a GlcNAc subunit on undecaprenyl-pyrophosphoryl-MurNAc-pentapeptide (lipid intermediate I) to form undecaprenyl-pyrophosphoryl-MurNAc-(pentapeptide)GlcNAc (lipid intermediate II). The chain is UDP-N-acetylglucosamine--N-acetylmuramyl-(pentapeptide) pyrophosphoryl-undecaprenol N-acetylglucosamine transferase from Aquifex aeolicus (strain VF5).